The primary structure comprises 497 residues: Glucose-6-phosphate 1-dehydrogenase (497 aa).

NADP(+)-binding positions include 15-22 (GASGDLSK), Arg-49, and Lys-153. D-glucose 6-phosphate contacts are provided by residues Lys-153, 183–187 (HYLGK), Glu-221, and Asp-240. The active-site Proton acceptor is the His-245. NADP(+) is bound at residue Arg-336. Position 339 (Lys-339) interacts with D-glucose 6-phosphate. NADP(+) contacts are provided by Lys-345, Arg-349, and Arg-371. Gln-373 lines the D-glucose 6-phosphate pocket. NADP(+)-binding positions include 379 to 381 (YLK), 399 to 401 (DLT), and Arg-466.

Belongs to the glucose-6-phosphate dehydrogenase family.

The catalysed reaction is D-glucose 6-phosphate + NADP(+) = 6-phospho-D-glucono-1,5-lactone + NADPH + H(+). The protein operates within carbohydrate degradation; pentose phosphate pathway; D-ribulose 5-phosphate from D-glucose 6-phosphate (oxidative stage): step 1/3. In terms of biological role, catalyzes the rate-limiting step of the oxidative pentose-phosphate pathway, which represents a route for the dissimilation of carbohydrates besides glycolysis. The main function of this enzyme is to provide reducing power (NADPH) and pentose phosphates for fatty acid and nucleic acid synthesis. This Kluyveromyces lactis (strain ATCC 8585 / CBS 2359 / DSM 70799 / NBRC 1267 / NRRL Y-1140 / WM37) (Yeast) protein is Glucose-6-phosphate 1-dehydrogenase (ZWF).